The chain runs to 300 residues: GTPase Era (300 aa).

The Era-type G domain occupies 4 to 172; that stretch reads KSGFVALAGK…LEKIKEELPE (169 aa). The segment at 12–19 is G1; it reads GKPNVGKS. 12–19 is a binding site for GTP; the sequence is GKPNVGKS. Residues 38 to 42 form a G2 region; it reads QTTRN. A G3 region spans residues 59 to 62; the sequence is DTPG. Residues 59-63 and 121-124 each bind GTP; these read DTPGI and NKID. Residues 121 to 124 are G4; sequence NKID. Residues 151–153 form a G5 region; it reads ISA. Residues 195–280 form the KH type-2 domain; that stretch reads IREKIFHLTR…YLDLNVKVKE (86 aa).

The protein belongs to the TRAFAC class TrmE-Era-EngA-EngB-Septin-like GTPase superfamily. Era GTPase family. In terms of assembly, monomer.

Its subcellular location is the cytoplasm. It localises to the cell inner membrane. In terms of biological role, an essential GTPase that binds both GDP and GTP, with rapid nucleotide exchange. Plays a role in 16S rRNA processing and 30S ribosomal subunit biogenesis and possibly also in cell cycle regulation and energy metabolism. In Thermotoga maritima (strain ATCC 43589 / DSM 3109 / JCM 10099 / NBRC 100826 / MSB8), this protein is GTPase Era.